Consider the following 240-residue polypeptide: Uridylate kinase (240 aa).

12 to 15 (KLSG) provides a ligand contact to ATP. The involved in allosteric activation by GTP stretch occupies residues 20–25 (GDQGYG). Residue Gly54 participates in UMP binding. ATP-binding residues include Gly55 and Arg59. UMP contacts are provided by residues Asp74 and 135-142 (TGNPYFST). ATP is bound by residues Asn163, Tyr169, and Asp172.

It belongs to the UMP kinase family. In terms of assembly, homohexamer.

It localises to the cytoplasm. It catalyses the reaction UMP + ATP = UDP + ADP. The protein operates within pyrimidine metabolism; CTP biosynthesis via de novo pathway; UDP from UMP (UMPK route): step 1/1. Its activity is regulated as follows. Allosterically activated by GTP. Inhibited by UTP. In terms of biological role, catalyzes the reversible phosphorylation of UMP to UDP. The sequence is that of Uridylate kinase from Oceanobacillus iheyensis (strain DSM 14371 / CIP 107618 / JCM 11309 / KCTC 3954 / HTE831).